We begin with the raw amino-acid sequence, 397 residues long: Phosphoglycerate kinase (397 aa).

Substrate is bound by residues 23-25, R38, 61-64, R122, and R155; these read DFN and HMGK. ATP is bound by residues K206, G296, E327, and 353 to 356; that span reads GGDS.

It belongs to the phosphoglycerate kinase family. As to quaternary structure, monomer.

The protein localises to the cytoplasm. It carries out the reaction (2R)-3-phosphoglycerate + ATP = (2R)-3-phospho-glyceroyl phosphate + ADP. It functions in the pathway carbohydrate degradation; glycolysis; pyruvate from D-glyceraldehyde 3-phosphate: step 2/5. The polypeptide is Phosphoglycerate kinase (Clostridium perfringens (strain ATCC 13124 / DSM 756 / JCM 1290 / NCIMB 6125 / NCTC 8237 / Type A)).